Here is a 245-residue protein sequence, read N- to C-terminus: Eukaryotic translation initiation factor 6 (245 aa).

The protein belongs to the eIF-6 family. In terms of assembly, monomer. Associates with the 60S ribosomal subunit.

Its subcellular location is the cytoplasm. The protein resides in the nucleus. It is found in the nucleolus. Functionally, binds to the 60S ribosomal subunit and prevents its association with the 40S ribosomal subunit to form the 80S initiation complex in the cytoplasm. May also be involved in ribosome biogenesis. The sequence is that of Eukaryotic translation initiation factor 6 (eif6) from Danio rerio (Zebrafish).